The sequence spans 325 residues: Protein ORANGE-GREEN, chloroplastic (325 aa).

The N-terminal 54 residues, 1 to 54 (MDRVLVASYPINHLIRPHSFRIDYCWSTCFTSRLNSGKERQKLSSRWRWRSMAS), are a transit peptide targeting the chloroplast. Positions 53-71 (ASDSTDSSSSSSFAPSVES) are enriched in low complexity. Positions 53–77 (ASDSTDSSSSSSFAPSVESDPSDKT) are disordered. Transmembrane regions (helical) follow at residues 164–184 (LYYV…GLLA) and 217–237 (IVAS…VVEV). The tract at residues 226–317 (VGVISALMVV…CTGMAMASEH (92 aa)) is CR-type-like. The stretch at 248–255 (CKYCLGTG) is one CXXCXGXG motif repeat. Residues 259–266 (CARCSNTG) form a CXXCXXXG motif repeat. Residues 292 to 299 (CQNCSGSG) form a CXXCXGXG motif repeat. The stretch at 303–310 (CPTCLCTG) is one CXXCXXXG motif repeat.

This sequence belongs to the orange-like family.

The protein localises to the plastid. It localises to the chloroplast membrane. Its function is as follows. Involved in chloroplast differentiation in fruit flesh. This Cucumis melo (Muskmelon) protein is Protein ORANGE-GREEN, chloroplastic.